We begin with the raw amino-acid sequence, 502 residues long: Glycerol kinase (502 aa).

Threonine 14 serves as a coordination point for ADP. ATP-binding residues include threonine 14, threonine 15, and serine 16. Threonine 14 is a sn-glycerol 3-phosphate binding site. Arginine 18 serves as a coordination point for ADP. The sn-glycerol 3-phosphate site is built by arginine 84, glutamate 85, and tyrosine 136. Glycerol contacts are provided by arginine 84, glutamate 85, and tyrosine 136. The residue at position 232 (histidine 232) is a Phosphohistidine; by HPr. Aspartate 246 lines the sn-glycerol 3-phosphate pocket. The glycerol site is built by aspartate 246 and glutamine 247. ADP-binding residues include threonine 268 and glycine 311. ATP is bound by residues threonine 268, glycine 311, glutamine 315, and glycine 412. ADP-binding residues include glycine 412 and asparagine 416.

The protein belongs to the FGGY kinase family. Homotetramer and homodimer (in equilibrium). The phosphoenolpyruvate-dependent sugar phosphotransferase system (PTS), including enzyme I, and histidine-containing protein (HPr) are required for the phosphorylation, which leads to the activation of the enzyme.

The catalysed reaction is glycerol + ATP = sn-glycerol 3-phosphate + ADP + H(+). It functions in the pathway polyol metabolism; glycerol degradation via glycerol kinase pathway; sn-glycerol 3-phosphate from glycerol: step 1/1. Its activity is regulated as follows. Activated by phosphorylation and inhibited by fructose 1,6-bisphosphate (FBP). Functionally, key enzyme in the regulation of glycerol uptake and metabolism. Catalyzes the phosphorylation of glycerol to yield sn-glycerol 3-phosphate. The sequence is that of Glycerol kinase from Streptococcus gordonii (strain Challis / ATCC 35105 / BCRC 15272 / CH1 / DL1 / V288).